Reading from the N-terminus, the 132-residue chain is Protein NrdI (132 aa).

Belongs to the NrdI family.

In terms of biological role, probably involved in ribonucleotide reductase function. The polypeptide is Protein NrdI (Bartonella henselae (strain ATCC 49882 / DSM 28221 / CCUG 30454 / Houston 1) (Rochalimaea henselae)).